A 703-amino-acid polypeptide reads, in one-letter code: Cycloartenol synthase (703 aa).

2 PFTB repeats span residues 59 to 103 and 106 to 148; these read IKKA…QLPE and QREI…RLLG. Residue Asp435 is the Proton donor of the active site. PFTB repeat units lie at residues 461–503, 539–579, 587–628, and 645–686; these read IADG…QNIM, IARG…VASG, IVKA…VNTG, and IERG…KNIF.

This sequence belongs to the terpene cyclase/mutase family.

The catalysed reaction is (S)-2,3-epoxysqualene = cycloartenol. Functionally, converts oxidosqualene to cycloartenol (in vitro). This Dictyostelium discoideum (Social amoeba) protein is Cycloartenol synthase (cas1).